Reading from the N-terminus, the 98-residue chain is MNTHFTYVLQCADQTLYCGYTTDLEKRLATHNSGKGAKYTKTRLPVKLLASVNFDNKNDAMSCEWWFKHKLVRQQKLKLIKNNLIKEKFLEYLLAKQK.

The GIY-YIG domain occupies 2-79 (NTHFTYVLQC…KLVRQQKLKL (78 aa)).

Belongs to the UPF0213 family.

The polypeptide is UPF0213 protein LACR_2011 (Lactococcus lactis subsp. cremoris (strain SK11)).